Here is a 381-residue protein sequence, read N- to C-terminus: Bifunctional enzyme Fae/Hps (381 aa).

Residues 1 to 150 form a formaldehyde-activating enzyme region; sequence MIKFGEAVLG…KEKYRALHPL (150 aa). A 3-hexulose-6-phosphate synthase region spans residues 151-381; sequence VGFRDVRLEY…DEDEDIGEEL (231 aa).

It in the N-terminal section; belongs to the formaldehyde-activating enzyme family. The protein in the C-terminal section; belongs to the HPS/KGPDC family. HPS subfamily.

The catalysed reaction is 5,6,7,8-tetrahydromethanopterin + formaldehyde = 5,10-methylenetetrahydromethanopterin + H2O. It catalyses the reaction D-ribulose 5-phosphate + formaldehyde = D-arabino-hex-3-ulose 6-phosphate. It participates in carbohydrate biosynthesis; D-ribose 5-phosphate biosynthesis. Its function is as follows. Catalyzes the condensation of formaldehyde with tetrahydromethanopterin (H(4)MPT) to 5,10-methylenetetrahydromethanopterin. In terms of biological role, catalyzes the reversible formation of ribulose-5-phosphate and formaldehyde from 3-hexulose-6-phosphate. The protein is Bifunctional enzyme Fae/Hps of Methanocaldococcus jannaschii (strain ATCC 43067 / DSM 2661 / JAL-1 / JCM 10045 / NBRC 100440) (Methanococcus jannaschii).